A 239-amino-acid chain; its full sequence is THAP domain-containing protein 3 (239 aa).

Residues methionine 1–phenylalanine 82 form a THAP-type zinc finger. A disordered region spans residues phenylalanine 84–aspartate 177. Residue serine 122 is modified to Phosphoserine. Residues aspartate 177 to tyrosine 180 carry the HCFC1-binding motif (HBM) motif.

In terms of assembly, component of a THAP1/THAP3-HCFC1-OGT complex that contains at least, either THAP1 or THAP3, HCFC1 and OGT. Interacts directly with OGT and HCFC1 (via its HBM). As to expression, highly expressed in heart, skeletal muscle and placenta. Weaker expression in brain, kidney and liver.

Component of a THAP1/THAP3-HCFC1-OGT complex that is required for the regulation of the transcriptional activity of RRM1. This chain is THAP domain-containing protein 3 (THAP3), found in Homo sapiens (Human).